A 267-amino-acid chain; its full sequence is Phosphate import ATP-binding protein PstB (267 aa).

One can recognise an ABC transporter domain in the interval 21 to 262; sequence IAIRNLEFYY…PSKQQTEDYI (242 aa). 53–60 contacts ATP; sequence GPSGCGKS.

It belongs to the ABC transporter superfamily. Phosphate importer (TC 3.A.1.7) family. In terms of assembly, the complex is composed of two ATP-binding proteins (PstB), two transmembrane proteins (PstC and PstA) and a solute-binding protein (PstS).

Its subcellular location is the cell inner membrane. It carries out the reaction phosphate(out) + ATP + H2O = ADP + 2 phosphate(in) + H(+). Its function is as follows. Part of the ABC transporter complex PstSACB involved in phosphate import. Responsible for energy coupling to the transport system. The protein is Phosphate import ATP-binding protein PstB of Xylella fastidiosa (strain 9a5c).